The chain runs to 392 residues: 1-deoxy-D-xylulose 5-phosphate reductoisomerase (392 aa).

NADPH is bound by residues threonine 10, glycine 11, serine 12, isoleucine 13, asparagine 38, and asparagine 124. Lysine 125 is a 1-deoxy-D-xylulose 5-phosphate binding site. Glutamate 126 is a binding site for NADPH. Aspartate 150 is a binding site for Mn(2+). Residues serine 151, glutamate 152, serine 176, and histidine 199 each contribute to the 1-deoxy-D-xylulose 5-phosphate site. Glutamate 152 contributes to the Mn(2+) binding site. An NADPH-binding site is contributed by glycine 205. Serine 212, asparagine 217, lysine 218, and glutamate 221 together coordinate 1-deoxy-D-xylulose 5-phosphate. Glutamate 221 is a Mn(2+) binding site.

Belongs to the DXR family. Mg(2+) serves as cofactor. The cofactor is Mn(2+).

The catalysed reaction is 2-C-methyl-D-erythritol 4-phosphate + NADP(+) = 1-deoxy-D-xylulose 5-phosphate + NADPH + H(+). Its pathway is isoprenoid biosynthesis; isopentenyl diphosphate biosynthesis via DXP pathway; isopentenyl diphosphate from 1-deoxy-D-xylulose 5-phosphate: step 1/6. Catalyzes the NADPH-dependent rearrangement and reduction of 1-deoxy-D-xylulose-5-phosphate (DXP) to 2-C-methyl-D-erythritol 4-phosphate (MEP). This chain is 1-deoxy-D-xylulose 5-phosphate reductoisomerase, found in Synechococcus sp. (strain JA-2-3B'a(2-13)) (Cyanobacteria bacterium Yellowstone B-Prime).